The primary structure comprises 87 residues: Small ribosomal subunit protein bS20 (87 aa).

Residues methionine 1–serine 26 are disordered.

It belongs to the bacterial ribosomal protein bS20 family.

Functionally, binds directly to 16S ribosomal RNA. This Escherichia coli O17:K52:H18 (strain UMN026 / ExPEC) protein is Small ribosomal subunit protein bS20.